We begin with the raw amino-acid sequence, 194 residues long: A-type ATP synthase subunit E (194 aa).

It belongs to the V-ATPase E subunit family. Has multiple subunits with at least A(3), B(3), C, D, E, F, H, I and proteolipid K(x).

It is found in the cell membrane. In terms of biological role, component of the A-type ATP synthase that produces ATP from ADP in the presence of a proton gradient across the membrane. This chain is A-type ATP synthase subunit E, found in Saccharolobus islandicus (strain Y.N.15.51 / Yellowstone #2) (Sulfolobus islandicus).